We begin with the raw amino-acid sequence, 860 residues long: Leucine--tRNA ligase (860 aa).

The 'HIGH' region signature appears at 42 to 52 (PYPSGRLHMGH). A 'KMSKS' region motif is present at residues 619–623 (KMSKS). Lys622 contacts ATP.

The protein belongs to the class-I aminoacyl-tRNA synthetase family.

It is found in the cytoplasm. It carries out the reaction tRNA(Leu) + L-leucine + ATP = L-leucyl-tRNA(Leu) + AMP + diphosphate. The protein is Leucine--tRNA ligase of Escherichia coli O6:K15:H31 (strain 536 / UPEC).